The following is a 1476-amino-acid chain: Coiled-coil domain-containing protein 88B (1476 aa).

Residues 253-481 (SHHLALQLAN…RGLLQVLQGQ (229 aa)) are a coiled coil. 4 disordered regions span residues 427 to 451 (QRSL…SLQD), 509 to 706 (VAFD…EGAL), 825 to 866 (RRQW…ERRE), and 1323 to 1476 (LMRP…SLSQ). S436 is modified (phosphoserine). A compositionally biased stretch (polar residues) spans 572–586 (SDWSPQESGSPVETQ). Residue S596 is modified to Phosphoserine. 3 stretches are compositionally biased toward basic and acidic residues: residues 678 to 690 (EARE…EGTV), 825 to 834 (RRQWEREGSR), and 842 to 866 (AEER…ERRE). The stretch at 720 to 1303 (LASGVAEQEA…KIMDQYRVLE (584 aa)) forms a coiled coil. Phosphoserine occurs at positions 1348 and 1379. Over residues 1448 to 1469 (LQEHETDANREGPEVQEPEKRP) the composition is skewed to basic and acidic residues.

This sequence belongs to the CCDC88 family. As to quaternary structure, homodimer. Interacts with DOCK8. Interacts (via C-terminus) with intact microtubules. Interacts with dynein-dynactin motor complex. Interacts (via C-terminus) with HSPA5. Expressed in endothelium (at protein level). Expressed in NK cells (at protein level).

It localises to the membrane. The protein resides in the cytoplasm. The protein localises to the cytoskeleton. It is found in the microtubule organizing center. Its subcellular location is the endoplasmic reticulum. It localises to the golgi apparatus. Its function is as follows. Acts as a positive regulator of T-cell maturation and inflammatory function. Required for several functions of T-cells, in both the CD4(+) and the CD8(+) compartments and this includes expression of cell surface markers of activation, proliferation, and cytokine production in response to specific or non-specific stimulation. Enhances NK cell cytotoxicity by positively regulating polarization of microtubule-organizing center (MTOC) to cytotoxic synapse, lytic granule transport along microtubules, and dynein-mediated clustering to MTOC. Interacts with HSPA5 and stabilizes the interaction between HSPA5 and ERN1, leading to suppression of ERN1-induced JNK activation and endoplasmic reticulum stress-induced apoptosis. The protein is Coiled-coil domain-containing protein 88B (CCDC88B) of Homo sapiens (Human).